A 365-amino-acid chain; its full sequence is Quinone oxidoreductase-like protein 2 homolog (365 aa).

Belongs to the zinc-containing alcohol dehydrogenase family. Quinone oxidoreductase subfamily.

In Nematostella vectensis (Starlet sea anemone), this protein is Quinone oxidoreductase-like protein 2 homolog.